The chain runs to 368 residues: 2-oxoglutarate-dependent dioxygenase frbJ (368 aa).

Positions 171 to 277 (QQHKLKIVKY…RYSIPFFQGV (107 aa)) constitute a Fe2OG dioxygenase domain. Fe cation contacts are provided by His198, Asp200, and His256. Residue Arg268 participates in 2-oxoglutarate binding.

Belongs to the iron/ascorbate-dependent oxidoreductase family.

The protein operates within antifungal biosynthesis. In terms of biological role, 2-oxoglutarate-dependent dioxygenase; part of the gene cluster that mediates the biosynthesis of the antifungal antibiotic FR901469, an inhibitor of beta-1,3-glucansynthase, exerting antifungal activity against the pathogenes Candida albicans and Aspergillus fumigatus. FR901469 is a cyclic depsipeptide containing 12 amino acid residues and a fatty acid chain. The NRPS frbI contains 12 modules responsible for the formation of the depsipeptide backbone which is denoted as Acyl-Thr-Ala-Tyr-Val-4OHPro-Thr-Thr-3OHPro-threo3OHGln-Gly-Thr-Orn-OH (C71H116N14O23). The PKS frbB is probably involved in the production of the hydrocarbon chain, and the acyl-CoA ligase frbC might be involved in the transport of the chain to the peptide ptoduct of frbI. Because FR901469 contains 3 hydroxylated amino acid residues, the 3 oxygenases frbA, frbH, and frbJ might be participating in amino acid hydroxylation. As no thioesterase domains were detected in frbI or frbB, the thioesterases frbD and frbE may instead release and cyclize the products of the NRPS and PKS, respectively. The polypeptide is 2-oxoglutarate-dependent dioxygenase frbJ (Dothideomycetidae sp. (strain 11243) (Fungal sp. (strain No.11243))).